A 277-amino-acid chain; its full sequence is MALKTYNPTTPGQRQLVMVDRSALYKGKPVKTLTEGKRGKGGRNNTGRITVRFRGGGHKQAYRNVDFKRGKTDVPAVVERLEYDPNRTAFIALIKYQDGEQAYILAPQRMAVGDTVVAGNYVDVKPGNVMPLGNMPVGTIVHNVEMKIGKGGQLARSAGTYAQIVGRDQDYVILRLNSGEQRLVHGRCRGAIGAVSNPDHMNTSVGKAGRTRWMGRRPHNRGVVMNPIDHPHGGGEGRTSGGRHPVTPWGKPTKGKKTRSNKSTNKFILISRHKRKK.

The tract at residues 199–277 (DHMNTSVGKA…ILISRHKRKK (79 aa)) is disordered. Positions 209–220 (GRTRWMGRRPHN) are enriched in basic residues.

The protein belongs to the universal ribosomal protein uL2 family. In terms of assembly, part of the 50S ribosomal subunit. Forms a bridge to the 30S subunit in the 70S ribosome.

Functionally, one of the primary rRNA binding proteins. Required for association of the 30S and 50S subunits to form the 70S ribosome, for tRNA binding and peptide bond formation. It has been suggested to have peptidyltransferase activity; this is somewhat controversial. Makes several contacts with the 16S rRNA in the 70S ribosome. The chain is Large ribosomal subunit protein uL2 from Nitrobacter winogradskyi (strain ATCC 25391 / DSM 10237 / CIP 104748 / NCIMB 11846 / Nb-255).